The primary structure comprises 874 residues: Alanine--tRNA ligase (874 aa).

4 residues coordinate Zn(2+): His562, His566, Cys664, and His668.

The protein belongs to the class-II aminoacyl-tRNA synthetase family. It depends on Zn(2+) as a cofactor.

The protein resides in the cytoplasm. The catalysed reaction is tRNA(Ala) + L-alanine + ATP = L-alanyl-tRNA(Ala) + AMP + diphosphate. In terms of biological role, catalyzes the attachment of alanine to tRNA(Ala) in a two-step reaction: alanine is first activated by ATP to form Ala-AMP and then transferred to the acceptor end of tRNA(Ala). Also edits incorrectly charged Ser-tRNA(Ala) and Gly-tRNA(Ala) via its editing domain. The polypeptide is Alanine--tRNA ligase (Shewanella loihica (strain ATCC BAA-1088 / PV-4)).